Reading from the N-terminus, the 1571-residue chain is Neurexin-3 (1571 aa).

Residues 1-27 form the signal peptide; the sequence is MSFTLHSVFFTLKVSIFLGSLVGLCLG. Residues 28–202 form the Laminin G-like 1 domain; that stretch reads LEFMGLPNQW…SVQLEAEGPC (175 aa). Topologically, residues 28–1496 are extracellular; the sequence is LEFMGLPNQW…EVIRESSSTT (1469 aa). Residues Asn-58 and Asn-105 are each glycosylated (N-linked (GlcNAc...) asparagine). The EGF-like 1 domain occupies 198 to 235; the sequence is AEGPCGERPCENGGICFLLDGHPTCDCSTTGYGGTLCS. Intrachain disulfides connect Cys-202–Cys-213, Cys-207–Cys-222, and Cys-224–Cys-234. Laminin G-like domains are found at residues 258-440 and 447-639; these read VATF…VFKC and DPIN…KSSC. Ca(2+) contacts are provided by Asp-304, Leu-321, and Met-374. Disulfide bonds link Cys-404/Cys-440, Cys-610/Cys-639, Cys-647/Cys-658, Cys-652/Cys-667, and Cys-669/Cys-679. In terms of domain architecture, EGF-like 2 spans 643 to 680; it reads SAKQCDSYPCKNNAVCKDGWNRFICDCTGTGYWGRTCE. Laminin G-like domains follow at residues 685–857 and 871–1046; these read ILSY…IDYC and DPVT…ERGC. Residues Asp-732 and Leu-749 each coordinate Ca(2+). Asn-757 carries N-linked (GlcNAc...) asparagine glycosylation. Arg-807 contributes to the Ca(2+) binding site. Intrachain disulfides connect Cys-1018–Cys-1046, Cys-1053–Cys-1064, Cys-1058–Cys-1073, and Cys-1075–Cys-1085. The EGF-like 3 domain occupies 1049-1086; that stretch reads PSTTCQEDSCANQGVCMQQWEGFTCDCSMTSYSGNQCN. The region spanning 1090–1290 is the Laminin G-like 6 domain; it reads ATYIFGKSGG…NPNIKINGSV (201 aa). Ca(2+)-binding residues include Asp-1142 and Ile-1159. Residue Asn-1189 is glycosylated (N-linked (GlcNAc...) asparagine). Residues Ile-1241 and Asn-1243 each contribute to the Ca(2+) site. 2 N-linked (GlcNAc...) asparagine glycosylation sites follow: Asn-1287 and Asn-1331. The interval 1324–1348 is disordered; that stretch reads ATTTTRKNRSTASIQPTSDDLVSSA. Over residues 1333–1348 the composition is skewed to polar residues; sequence STASIQPTSDDLVSSA. Ser-1347 carries O-linked (Xyl...) (heparan sulfate) serine glycosylation. Residues 1497-1517 form a helical membrane-spanning segment; sequence GMVVGIVAAAALCILILLYAM. Residues 1518–1571 are Cytoplasmic-facing; sequence YKYRNRDEGSYQVDETRNYISNSAQSNGTLMKEKQASSKSGHKKQKNKDKEYYV. The disordered stretch occupies residues 1539–1571; that stretch reads NSAQSNGTLMKEKQASSKSGHKKQKNKDKEYYV.

This sequence belongs to the neurexin family. In terms of assembly, the laminin G-like domain 2 binds to NXPH1. Specific isoforms bind to alpha-dystroglycan. The cytoplasmic C-terminal region binds to CASK. Specific isoforms bind neuroligins NLGN1, NLGN2 and NLGN3. Interacts with CLSTN3. Post-translationally, O-glycosylated; contains heparan sulfate. Heparan sulfate attachment is required for synapse development by mediating interactions with neuroligins. As to expression, brain and arteries (at protein level).

It localises to the presynaptic cell membrane. Its function is as follows. Neuronal cell surface protein that may be involved in cell recognition and cell adhesion. May mediate intracellular signaling. In Mus musculus (Mouse), this protein is Neurexin-3 (Nrxn3).